The primary structure comprises 455 residues: UDP-N-acetylmuramoylalanine--D-glutamate ligase (455 aa).

118–124 (GSNAKST) serves as a coordination point for ATP.

This sequence belongs to the MurCDEF family.

The protein localises to the cytoplasm. The enzyme catalyses UDP-N-acetyl-alpha-D-muramoyl-L-alanine + D-glutamate + ATP = UDP-N-acetyl-alpha-D-muramoyl-L-alanyl-D-glutamate + ADP + phosphate + H(+). Its pathway is cell wall biogenesis; peptidoglycan biosynthesis. Functionally, cell wall formation. Catalyzes the addition of glutamate to the nucleotide precursor UDP-N-acetylmuramoyl-L-alanine (UMA). The sequence is that of UDP-N-acetylmuramoylalanine--D-glutamate ligase from Chromohalobacter salexigens (strain ATCC BAA-138 / DSM 3043 / CIP 106854 / NCIMB 13768 / 1H11).